A 141-amino-acid chain; its full sequence is Nucleoside diphosphate kinase (141 aa).

Lysine 11, phenylalanine 59, arginine 87, threonine 93, arginine 104, and asparagine 114 together coordinate ATP. The active-site Pros-phosphohistidine intermediate is the histidine 117.

Belongs to the NDK family. In terms of assembly, homotetramer. It depends on Mg(2+) as a cofactor.

The protein resides in the cytoplasm. The catalysed reaction is a 2'-deoxyribonucleoside 5'-diphosphate + ATP = a 2'-deoxyribonucleoside 5'-triphosphate + ADP. It carries out the reaction a ribonucleoside 5'-diphosphate + ATP = a ribonucleoside 5'-triphosphate + ADP. Its function is as follows. Major role in the synthesis of nucleoside triphosphates other than ATP. The ATP gamma phosphate is transferred to the NDP beta phosphate via a ping-pong mechanism, using a phosphorylated active-site intermediate. This is Nucleoside diphosphate kinase from Vibrio vulnificus (strain CMCP6).